The sequence spans 206 residues: Holliday junction branch migration complex subunit RuvA (206 aa).

A domain I region spans residues 1-64 (MIAKLTGLLD…EDNIQLFGFA (64 aa)). The domain II stretch occupies residues 65-143 (DTEERDWFRL…SFGAPAPAAA (79 aa)). The interval 144–154 (TAGKGGAAPAG) is flexible linker. Residues 154 to 206 (GPAGAVADAVSALVNLGYRRVEAFTAVNAVAQRLGPEAGVSDLIRAGLKELSP) form a domain III region.

It belongs to the RuvA family. In terms of assembly, homotetramer. Forms an RuvA(8)-RuvB(12)-Holliday junction (HJ) complex. HJ DNA is sandwiched between 2 RuvA tetramers; dsDNA enters through RuvA and exits via RuvB. An RuvB hexamer assembles on each DNA strand where it exits the tetramer. Each RuvB hexamer is contacted by two RuvA subunits (via domain III) on 2 adjacent RuvB subunits; this complex drives branch migration. In the full resolvosome a probable DNA-RuvA(4)-RuvB(12)-RuvC(2) complex forms which resolves the HJ.

The protein resides in the cytoplasm. Its function is as follows. The RuvA-RuvB-RuvC complex processes Holliday junction (HJ) DNA during genetic recombination and DNA repair, while the RuvA-RuvB complex plays an important role in the rescue of blocked DNA replication forks via replication fork reversal (RFR). RuvA specifically binds to HJ cruciform DNA, conferring on it an open structure. The RuvB hexamer acts as an ATP-dependent pump, pulling dsDNA into and through the RuvAB complex. HJ branch migration allows RuvC to scan DNA until it finds its consensus sequence, where it cleaves and resolves the cruciform DNA. The polypeptide is Holliday junction branch migration complex subunit RuvA (Rhodospirillum centenum (strain ATCC 51521 / SW)).